Consider the following 34-residue polypeptide: Photosystem II reaction center protein T (34 aa).

The helical transmembrane segment at 3 to 23 (ALVYTFLLVSTLGIIFFAIFF) threads the bilayer.

It belongs to the PsbT family. In terms of assembly, PSII is composed of 1 copy each of membrane proteins PsbA, PsbB, PsbC, PsbD, PsbE, PsbF, PsbH, PsbI, PsbJ, PsbK, PsbL, PsbM, PsbT, PsbY, PsbZ, Psb30/Ycf12, at least 3 peripheral proteins of the oxygen-evolving complex and a large number of cofactors. It forms dimeric complexes.

It localises to the plastid. The protein resides in the chloroplast thylakoid membrane. Its function is as follows. Found at the monomer-monomer interface of the photosystem II (PS II) dimer, plays a role in assembly and dimerization of PSII. PSII is a light-driven water plastoquinone oxidoreductase, using light energy to abstract electrons from H(2)O, generating a proton gradient subsequently used for ATP formation. The chain is Photosystem II reaction center protein T from Solanum lycopersicum (Tomato).